Here is a 928-residue protein sequence, read N- to C-terminus: Envelope glycoprotein B (928 aa).

Positions 1–12 are enriched in low complexity; the sequence is MAARGGAERAAG. 2 disordered regions span residues 1–25 and 67–105; these read MAAR…RHLR and GRPA…SPDN. The signal sequence occupies residues 1–62; the sequence is MAARGGAERA…LWATWALLLA (62 aa). The Virion surface portion of the chain corresponds to 63 to 803; that stretch reads APAAGRPATT…SGIASFIANP (741 aa). A compositionally biased stretch (pro residues) spans 71–95; that stretch reads TTPPAPPPEEAASPAPPASPSPPGP. N-linked (GlcNAc...) asparagine; by host glycans are attached at residues asparagine 105 and asparagine 153. 5 disulfide bridges follow: cysteine 128–cysteine 606, cysteine 145–cysteine 562, cysteine 219–cysteine 283, cysteine 376–cysteine 424, and cysteine 627–cysteine 662. 2 involved in fusion and/or binding to host membrane regions span residues 185-191 and 270-277; these read TWAGSTY and GSAGLYRT. Residues asparagine 442 and asparagine 484 are each glycosylated (N-linked (GlcNAc...) asparagine; by host). A disordered region spans residues 495 to 525; that stretch reads APKPGPRRARRPRRLRPAPGRGQRARRRRHA. The span at 499-510 shows a compositional bias: basic residues; it reads GPRRARRPRRLR. Residues asparagine 637 and asparagine 703 are each glycosylated (N-linked (GlcNAc...) asparagine; by host). 2 hydrophobic membrane proximal region regions span residues 748–801 and 781–801; these read IDRV…SFIA and VVLG…SFIA. A helical membrane pass occupies residues 804–824; that stretch reads FGALATGLLVLAGLVAAFLAY. Topologically, residues 825-928 are intravirion; sequence RYISRLRSNP…QLPMADVGGA (104 aa). The Golgi targeting motif lies at 876–879; the sequence is YMSL. The Internalization motif signature appears at 917–920; the sequence is YQQL.

This sequence belongs to the herpesviridae glycoprotein B family. As to quaternary structure, homotrimer; disulfide-linked. Binds to heparan sulfate proteoglycans. Interacts with gH/gL heterodimer. Post-translationally, a proteolytic cleavage by host furin generates two subunits that remain linked by disulfide bonds.

It localises to the virion membrane. It is found in the host cell membrane. Its subcellular location is the host endosome membrane. The protein localises to the host Golgi apparatus membrane. Functionally, envelope glycoprotein that forms spikes at the surface of virion envelope. Essential for the initial attachment to heparan sulfate moieties of the host cell surface proteoglycans. Involved in fusion of viral and cellular membranes leading to virus entry into the host cell. Following initial binding to its host receptors, membrane fusion is mediated by the fusion machinery composed at least of gB and the heterodimer gH/gL. May be involved in the fusion between the virion envelope and the outer nuclear membrane during virion egress. The sequence is that of Envelope glycoprotein B from Bovine herpesvirus 1.1 (strain P8-2) (BoHV-1).